The primary structure comprises 524 residues: uncharacterized protein (524 aa).

Residues 1–65 are disordered; the sequence is MSDPFFTRPE…IDEENEDTYE (65 aa). Residues 21-32 are compositionally biased toward basic and acidic residues; that stretch reads SKREKENQKLER. Over residues 51 to 64 the composition is skewed to acidic residues; it reads GFEDEIDEENEDTY. WD repeat units follow at residues 131-176, 206-245, 248-287, 290-329, 342-380, 409-448, and 457-503; these read IETA…DTEN, DHVK…PQHC, HHRD…YIET, GHQD…QLVF, YMEG…PLFT, PQPR…RSFE, and SVYG…PNSG.

The protein localises to the nucleus. This is an uncharacterized protein from Schizosaccharomyces pombe (strain 972 / ATCC 24843) (Fission yeast).